Consider the following 128-residue polypeptide: NADPH-dependent 7-cyano-7-deazaguanine reductase (128 aa).

Residue Cys-34 is the Thioimide intermediate of the active site. Asp-41 acts as the Proton donor in catalysis. Substrate-binding positions include 56–58 (VEL) and 75–76 (HE).

Belongs to the GTP cyclohydrolase I family. QueF type 1 subfamily.

The protein resides in the cytoplasm. The catalysed reaction is 7-aminomethyl-7-carbaguanine + 2 NADP(+) = 7-cyano-7-deazaguanine + 2 NADPH + 3 H(+). Its pathway is tRNA modification; tRNA-queuosine biosynthesis. Catalyzes the NADPH-dependent reduction of 7-cyano-7-deazaguanine (preQ0) to 7-aminomethyl-7-deazaguanine (preQ1). The protein is NADPH-dependent 7-cyano-7-deazaguanine reductase of Thermomicrobium roseum (strain ATCC 27502 / DSM 5159 / P-2).